The following is a 266-amino-acid chain: MRLIPLKSASQVGLWSARYIVDRINGFKPTAERPFVLGLPTGGTPLNTYKRLIELHKAGEVSFQNVVTFNMDEYVGLPEDHPESYHSFMHNNFFSHIDIRPENINILNGNAPDLVAECKRYEDKIKSYGKIHLFMGGVGNDGHIAFNEPASSLSSRTRVKTLTEDTRIANSRFFGGDMEQVPKLALTVGVGTLMDAEEIMILVTGHGKAQALQAAVEGSVNHMWTISTLQLHPKGMMVCDEPSTMELKVKTVRYFQQLEAANIGRL.

Asp-72 (proton acceptor; for enolization step) is an active-site residue. The For ring-opening step role is filled by Asp-141. The Proton acceptor; for ring-opening step role is filled by His-143. Residue Glu-148 is the For ring-opening step of the active site.

It belongs to the glucosamine/galactosamine-6-phosphate isomerase family. NagB subfamily. In terms of assembly, homohexamer.

The enzyme catalyses alpha-D-glucosamine 6-phosphate + H2O = beta-D-fructose 6-phosphate + NH4(+). Its pathway is amino-sugar metabolism; N-acetylneuraminate degradation; D-fructose 6-phosphate from N-acetylneuraminate: step 5/5. Allosterically activated by N-acetylglucosamine 6-phosphate (GlcNAc6P). Its function is as follows. Catalyzes the reversible isomerization-deamination of glucosamine 6-phosphate (GlcN6P) to form fructose 6-phosphate (Fru6P) and ammonium ion. The chain is Glucosamine-6-phosphate deaminase from Aeromonas hydrophila subsp. hydrophila (strain ATCC 7966 / DSM 30187 / BCRC 13018 / CCUG 14551 / JCM 1027 / KCTC 2358 / NCIMB 9240 / NCTC 8049).